The sequence spans 384 residues: Organic solute transporter alpha-like protein 1 (384 aa).

At 1–38 the chain is on the extracellular side; that stretch reads MEIVKTIIPHNRSYIEPPIPSATEWLANMSVMHVSCLT. N-linked (GlcNAc...) asparagine glycosylation is found at N11 and N28. The helical transmembrane segment at 39-59 threads the bilayer; sequence IACVFVAITFLSSFFHLFFVL. The Cytoplasmic segment spans residues 60–70; the sequence is KYVSNERIRND. Residues 71 to 91 form a helical membrane-spanning segment; that stretch reads MYALIFMFPITTFASLVGMFI. Residues 92-93 lie on the Extracellular side of the membrane; sequence PR. A helical transmembrane segment spans residues 94-114; that stretch reads AAIFLYAVSLVYFMFTLFIMV. Residues 115-165 are Cytoplasmic-facing; sequence TLLFNIFGGRQEMSAYLLQRNIRVNFTVPPLCFFKFLPTVESTDQNLRRIE. A helical membrane pass occupies residues 166 to 186; it reads WLVFQTPIIRTLLELVSVVVS. Residues 187-202 lie on the Extracellular side of the membrane; sequence MEQEGRRESVWFVFSQ. A helical membrane pass occupies residues 203-223; it reads LMALLSMCIAFYGCYVMVPLG. Topologically, residues 224–240 are cytoplasmic; that stretch reads REKHAPYRFDFLFRTCD. Residues 241 to 261 form a helical membrane-spanning segment; the sequence is IAQCIYTIQKFVFEFAAAVGL. Residues 262–273 lie on the Extracellular side of the membrane; the sequence is ITSDRYLPAAAK. The helical transmembrane segment at 274–294 threads the bilayer; that stretch reads ALWWASFMCTWEMMLLSALCS. At 295–384 the chain is on the cytoplasmic side; it reads YCLRPAKCKF…FDSLSQIQGQ (90 aa).

The protein belongs to the OST-alpha family.

It localises to the cell membrane. Functionally, probable transporter. The chain is Organic solute transporter alpha-like protein 1 (osta-1) from Caenorhabditis elegans.